The primary structure comprises 289 residues: MFNGSLVALVTPMQENGEIDYSNLKELVEWHLENDTDGLVILGTTGESPTITAEERHKIIRQVVDQVNKKIPIIVGTGANSTVHTIEMTQQAMELGADAALIVTPYYNKPTQEGLFQYFKTIAEAVPIAQILYNVPSRTACDLLPETVIRIAKCSNVVGLKEATGDIQRVKQLKAEDLDLLSGDDKTAMDFMLAGGKGVISVVANVVPKPYHAFCITAVSGNVELAKKENDQLSPLYDSLFVESNPIPVKWALSQMGVIPKGIRLPLTPLSERYHAKVRESLQQVGIKC.

Position 45 (Thr45) interacts with pyruvate. The Proton donor/acceptor role is filled by Tyr133. Lys161 serves as the catalytic Schiff-base intermediate with substrate. Ile200 contributes to the pyruvate binding site.

This sequence belongs to the DapA family. As to quaternary structure, homotetramer; dimer of dimers.

Its subcellular location is the cytoplasm. It catalyses the reaction L-aspartate 4-semialdehyde + pyruvate = (2S,4S)-4-hydroxy-2,3,4,5-tetrahydrodipicolinate + H2O + H(+). The protein operates within amino-acid biosynthesis; L-lysine biosynthesis via DAP pathway; (S)-tetrahydrodipicolinate from L-aspartate: step 3/4. Its function is as follows. Catalyzes the condensation of (S)-aspartate-beta-semialdehyde [(S)-ASA] and pyruvate to 4-hydroxy-tetrahydrodipicolinate (HTPA). The polypeptide is 4-hydroxy-tetrahydrodipicolinate synthase (Coxiella burnetii (strain Dugway 5J108-111)).